The following is a 311-amino-acid chain: DNA replication terminus site-binding protein (311 aa).

The protein belongs to the Tus family.

The protein localises to the cytoplasm. In terms of biological role, trans-acting protein required for termination of DNA replication. Binds to DNA replication terminator sequences (terA to terF) to prevent the passage of replication forks. The termination efficiency will be affected by the affinity of this protein for the terminator sequence. This chain is DNA replication terminus site-binding protein, found in Yersinia pestis.